The primary structure comprises 57 residues: Large ribosomal subunit protein eL37 (57 aa).

The Zn(2+) site is built by Cys-20, Cys-23, Cys-35, and Cys-38. The segment at 20–38 (CRRCGEKSYHKQKKVCASC) adopts a C4-type zinc-finger fold.

It belongs to the eukaryotic ribosomal protein eL37 family. Zn(2+) serves as cofactor.

In terms of biological role, binds to the 23S rRNA. This is Large ribosomal subunit protein eL37 from Natronomonas pharaonis (strain ATCC 35678 / DSM 2160 / CIP 103997 / JCM 8858 / NBRC 14720 / NCIMB 2260 / Gabara) (Halobacterium pharaonis).